The primary structure comprises 85 residues: UPF0213 protein NP_0776A (85 aa).

The GIY-YIG domain maps to 3–78 (ADHYVYVLSC…KSLSRAKKER (76 aa)). Positions 58–70 (KSAAMQREHEIKS) are enriched in basic and acidic residues. The segment at 58-85 (KSAAMQREHEIKSLSRAKKERLVADETG) is disordered.

The protein belongs to the UPF0213 family.

In Natronomonas pharaonis (strain ATCC 35678 / DSM 2160 / CIP 103997 / JCM 8858 / NBRC 14720 / NCIMB 2260 / Gabara) (Halobacterium pharaonis), this protein is UPF0213 protein NP_0776A.